The primary structure comprises 98 residues: Prolactin-releasing peptide (98 aa).

An N-terminal signal peptide occupies residues 1-22 (MKAVGAWLLCLLLLGLALQGAA). Disordered regions lie at residues 52-71 (RFGR…PRRV) and 79-98 (GGAE…LVQE). Phe53 is subject to Phenylalanine amide. The propeptide occupies 58–98 (AAPGDGPRPGPRRVPACFRLEGGAEPSRALPGRLTAQLVQE).

Post-translationally, amidation of C-terminus is required for receptor interaction. In terms of tissue distribution, medulla oblongata and hypothalamus.

Its subcellular location is the secreted. Functionally, stimulates prolactin (PRL) release and regulates the expression of prolactin through its receptor GPR10. May stimulate lactotrophs directly to secrete PRL. This chain is Prolactin-releasing peptide (PRLH), found in Bos taurus (Bovine).